The chain runs to 330 residues: ADP-L-glycero-D-manno-heptose-6-epimerase (330 aa).

NADP(+) is bound by residues 11-12, 32-33, K39, K54, 75-79, and N92; these read FI, DN, and EGACS. Y139 functions as the Proton acceptor in the catalytic mechanism. An NADP(+)-binding site is contributed by K143. Residue N168 coordinates substrate. NADP(+) is bound by residues V169 and K177. Catalysis depends on K177, which acts as the Proton acceptor. Residues R179, H186, 200-203, R213, and Y292 each bind substrate; that span reads FGEY.

It belongs to the NAD(P)-dependent epimerase/dehydratase family. HldD subfamily. Homopentamer. NADP(+) is required as a cofactor.

It catalyses the reaction ADP-D-glycero-beta-D-manno-heptose = ADP-L-glycero-beta-D-manno-heptose. It participates in nucleotide-sugar biosynthesis; ADP-L-glycero-beta-D-manno-heptose biosynthesis; ADP-L-glycero-beta-D-manno-heptose from D-glycero-beta-D-manno-heptose 7-phosphate: step 4/4. Its function is as follows. Catalyzes the interconversion between ADP-D-glycero-beta-D-manno-heptose and ADP-L-glycero-beta-D-manno-heptose via an epimerization at carbon 6 of the heptose. The chain is ADP-L-glycero-D-manno-heptose-6-epimerase from Burkholderia thailandensis (strain ATCC 700388 / DSM 13276 / CCUG 48851 / CIP 106301 / E264).